Reading from the N-terminus, the 306-residue chain is Bifunctional protein FolD (306 aa).

Residues 166 to 168 (GRS) and I232 each bind NADP(+).

It belongs to the tetrahydrofolate dehydrogenase/cyclohydrolase family. As to quaternary structure, homodimer.

It carries out the reaction (6R)-5,10-methylene-5,6,7,8-tetrahydrofolate + NADP(+) = (6R)-5,10-methenyltetrahydrofolate + NADPH. The catalysed reaction is (6R)-5,10-methenyltetrahydrofolate + H2O = (6R)-10-formyltetrahydrofolate + H(+). It participates in one-carbon metabolism; tetrahydrofolate interconversion. In terms of biological role, catalyzes the oxidation of 5,10-methylenetetrahydrofolate to 5,10-methenyltetrahydrofolate and then the hydrolysis of 5,10-methenyltetrahydrofolate to 10-formyltetrahydrofolate. In Methylorubrum extorquens (strain CM4 / NCIMB 13688) (Methylobacterium extorquens), this protein is Bifunctional protein FolD.